A 142-amino-acid polypeptide reads, in one-letter code: Transmembrane protein 170A (142 aa).

Topologically, residues 1–48 (MEGGGGGLGGEPGLLQQILSLRLVPRVGNVTDCQRATLCSFPEMWYGV) are lumenal. An N-linked (GlcNAc...) asparagine glycan is attached at Asn-29. The helical transmembrane segment at 49 to 69 (FLWALVSSLFFHIPAGLLALF) threads the bilayer. Residues 70-78 (TLRHHKYGR) lie on the Cytoplasmic side of the membrane. A helical transmembrane segment spans residues 79–99 (FMSVGIFLMGVLGPISAGILT). The Lumenal segment spans residues 100–114 (SAAIAGVYKAAGKEM). A helical membrane pass occupies residues 115–135 (IPFEALVLGVGQTFCVLIVSF). At 136–142 (LRILATL) the chain is on the cytoplasmic side.

The protein belongs to the TMEM170 family.

It localises to the endoplasmic reticulum membrane. Its subcellular location is the nucleus envelope. Its function is as follows. May regulate membrane morphogenesis in the endoplasmic reticulum (ER) by promoting ER sheet formation at the expense of ER tubules. The sequence is that of Transmembrane protein 170A (tmem170a) from Xenopus laevis (African clawed frog).